Reading from the N-terminus, the 88-residue chain is DNA-directed RNA polymerase subunit omega (88 aa).

It belongs to the RNA polymerase subunit omega family. The RNAP catalytic core consists of 2 alpha, 1 beta, 1 beta' and 1 omega subunit. When a sigma factor is associated with the core the holoenzyme is formed, which can initiate transcription.

It catalyses the reaction RNA(n) + a ribonucleoside 5'-triphosphate = RNA(n+1) + diphosphate. In terms of biological role, promotes RNA polymerase assembly. Latches the N- and C-terminal regions of the beta' subunit thereby facilitating its interaction with the beta and alpha subunits. This chain is DNA-directed RNA polymerase subunit omega, found in Kineococcus radiotolerans (strain ATCC BAA-149 / DSM 14245 / SRS30216).